A 216-amino-acid polypeptide reads, in one-letter code: Glutathione S-transferase D5 (216 aa).

In terms of domain architecture, GST N-terminal spans 1–80 (MDFYYSPRGS…YLVEKYGKDD (80 aa)). Glutathione-binding positions include 50–52 (HTI) and 64–66 (ESR). Residues 86-207 (DPKKQALVNQ…KGAVELKGVF (122 aa)) form the GST C-terminal domain.

Belongs to the GST superfamily. Delta family. As to quaternary structure, homodimer.

The catalysed reaction is RX + glutathione = an S-substituted glutathione + a halide anion + H(+). Functionally, conjugation of reduced glutathione to a wide number of exogenous and endogenous hydrophobic electrophiles. May be involved in detoxification. The sequence is that of Glutathione S-transferase D5 from Drosophila melanogaster (Fruit fly).